The following is a 1255-amino-acid chain: TBC1 domain family member 1 (1255 aa).

The residue at position 146 (Ser-146) is a Phosphoserine. The segment at Arg-208 to Lys-228 is disordered. At Ser-229 the chain carries Phosphoserine; by PKB/AKT1. Residue Ser-231 is modified to Phosphoserine; by AMPK. The 161-residue stretch at Leu-238 to Gly-398 folds into the PID domain. Phosphoserine; by PKB/AKT1 is present on Ser-489. A Phosphoserine modification is found at Ser-497. Residue Thr-499 is modified to Phosphothreonine; by PKB/AKT1. Phosphoserine occurs at positions 501, 519, 521, 559, 560, 564, 565, and 579. Disordered regions lie at residues Gly-509–Lys-544 and Ser-559–Gln-581. The span at Ser-519–Leu-539 shows a compositional bias: low complexity. Thr-590 is modified (phosphothreonine). Disordered regions lie at residues Pro-595–Arg-614 and Ser-621–Val-681. Ser-608 carries the post-translational modification Phosphoserine. A Phosphoserine; by PKB/AKT1 modification is found at Ser-621. Ser-660 and Ser-661 each carry phosphoserine. Residues His-670 to Asn-679 are compositionally biased toward polar residues. Ser-697 carries the phosphoserine; by PKB/AKT1 modification. Ser-698 and Ser-699 each carry phosphoserine. Position 700 is a phosphoserine; by AMPK (Ser-700). The tract at residues Asp-764 to Pro-786 is disordered. A phosphoserine mark is found at Ser-782 and Ser-1028. The 195-residue stretch at Gly-887 to Gly-1081 folds into the Rab-GAP TBC domain. Residue Tyr-1039 is modified to Phosphotyrosine. Thr-1218 carries the post-translational modification Phosphothreonine. The segment at Leu-1233–Asp-1255 is disordered.

Interacts with APPL2 (via BAR domain); interaction is dependent of TBC1D1 phosphorylation at Ser-229; interaction diminishes the phosphorylation of TBC1D1 at Thr-590, resulting in inhibition of SLC2A4/GLUT4 translocation and glucose uptake. Post-translationally, insulin-stimulated phosphorylation by AKT family kinases stimulates SLC2A4/GLUT4 translocation. Expressed in highest levels in hematopoietic cells, testis and kidney.

Its subcellular location is the nucleus. Its function is as follows. May act as a GTPase-activating protein for Rab family protein(s). May play a role in the cell cycle and differentiation of various tissues. Involved in the trafficking and translocation of GLUT4-containing vesicles and insulin-stimulated glucose uptake into cells. The protein is TBC1 domain family member 1 (Tbc1d1) of Mus musculus (Mouse).